Consider the following 598-residue polypeptide: Elongation factor 4 2 (598 aa).

Residues 2–184 form the tr-type G domain; sequence KHIRNFCIIA…GIVKNLPAPK (183 aa). Residues 14–19 and 131–134 each bind GTP; these read DHGKST and NKID.

This sequence belongs to the TRAFAC class translation factor GTPase superfamily. Classic translation factor GTPase family. LepA subfamily.

Its subcellular location is the cell inner membrane. The enzyme catalyses GTP + H2O = GDP + phosphate + H(+). Required for accurate and efficient protein synthesis under certain stress conditions. May act as a fidelity factor of the translation reaction, by catalyzing a one-codon backward translocation of tRNAs on improperly translocated ribosomes. Back-translocation proceeds from a post-translocation (POST) complex to a pre-translocation (PRE) complex, thus giving elongation factor G a second chance to translocate the tRNAs correctly. Binds to ribosomes in a GTP-dependent manner. This is Elongation factor 4 2 from Rhodopirellula baltica (strain DSM 10527 / NCIMB 13988 / SH1).